Consider the following 248-residue polypeptide: Spherulin-1B (248 aa).

Positions 1–20 (MQVRNILVALVVVCFAVSEA) are cleaved as a signal peptide. One can recognise a Cupin type-1 domain in the interval 61–207 (FDFKNSKLGV…SLNISSIQTV (147 aa)). 4 residues coordinate Mn(2+): H110, H112, E117, and H157. N200 carries an N-linked (GlcNAc...) asparagine glycan.

Belongs to the germin family.

It is found in the secreted. Its subcellular location is the cell wall. The polypeptide is Spherulin-1B (Physarum polycephalum (Slime mold)).